We begin with the raw amino-acid sequence, 128 residues long: Large ribosomal subunit protein eL22 (128 aa).

The protein belongs to the eukaryotic ribosomal protein eL22 family. In terms of assembly, component of the large ribosomal subunit.

It localises to the cytoplasm. Component of the large ribosomal subunit. The ribosome is a large ribonucleoprotein complex responsible for the synthesis of proteins in the cell. This Gallus gallus (Chicken) protein is Large ribosomal subunit protein eL22 (RPL22).